We begin with the raw amino-acid sequence, 549 residues long: Chaperonin GroEL (549 aa).

Residues 29 to 32 (TLGP), K50, 86 to 90 (DGTTT), G414, 478 to 480 (NAA), and D494 contribute to the ATP site.

The protein belongs to the chaperonin (HSP60) family. Forms a cylinder of 14 subunits composed of two heptameric rings stacked back-to-back. Interacts with the co-chaperonin GroES.

The protein resides in the cytoplasm. It catalyses the reaction ATP + H2O + a folded polypeptide = ADP + phosphate + an unfolded polypeptide.. Its function is as follows. Together with its co-chaperonin GroES, plays an essential role in assisting protein folding. The GroEL-GroES system forms a nano-cage that allows encapsulation of the non-native substrate proteins and provides a physical environment optimized to promote and accelerate protein folding. The protein is Chaperonin GroEL of Psychrobacter cryohalolentis (strain ATCC BAA-1226 / DSM 17306 / VKM B-2378 / K5).